The following is a 494-amino-acid chain: Guanosine-5'-triphosphate,3'-diphosphate pyrophosphatase (494 aa).

It belongs to the GppA/Ppx family. GppA subfamily.

The catalysed reaction is guanosine 3'-diphosphate 5'-triphosphate + H2O = guanosine 3',5'-bis(diphosphate) + phosphate + H(+). It functions in the pathway purine metabolism; ppGpp biosynthesis; ppGpp from GTP: step 2/2. Catalyzes the conversion of pppGpp to ppGpp. Guanosine pentaphosphate (pppGpp) is a cytoplasmic signaling molecule which together with ppGpp controls the 'stringent response', an adaptive process that allows bacteria to respond to amino acid starvation, resulting in the coordinated regulation of numerous cellular activities. The sequence is that of Guanosine-5'-triphosphate,3'-diphosphate pyrophosphatase from Escherichia coli O157:H7.